The chain runs to 180 residues: Small ribosomal subunit protein eS10y (180 aa).

The interval 92-180 is disordered; it reads LKKQQKPLGR…GGGAAGSDLP (89 aa). Basic and acidic residues predominate over residues 108–128; the sequence is DRPRGPPRGDGERRFGDRDGY. Gly residues predominate over residues 152–180; sequence FRGGAGGARQGFGRGAGGFGGGAAGSDLP.

This sequence belongs to the eukaryotic ribosomal protein eS10 family.

The protein localises to the cytoplasm. The protein is Small ribosomal subunit protein eS10y (RPS10B) of Arabidopsis thaliana (Mouse-ear cress).